We begin with the raw amino-acid sequence, 365 residues long: Histidinol-phosphate aminotransferase (365 aa).

Lysine 220 carries the N6-(pyridoxal phosphate)lysine modification.

This sequence belongs to the class-II pyridoxal-phosphate-dependent aminotransferase family. Histidinol-phosphate aminotransferase subfamily. In terms of assembly, homodimer. Pyridoxal 5'-phosphate is required as a cofactor.

It carries out the reaction L-histidinol phosphate + 2-oxoglutarate = 3-(imidazol-4-yl)-2-oxopropyl phosphate + L-glutamate. Its pathway is amino-acid biosynthesis; L-histidine biosynthesis; L-histidine from 5-phospho-alpha-D-ribose 1-diphosphate: step 7/9. In Xylella fastidiosa (strain Temecula1 / ATCC 700964), this protein is Histidinol-phosphate aminotransferase (hisC).